A 473-amino-acid chain; its full sequence is Glutamate-1-semialdehyde 2,1-aminomutase, chloroplastic (473 aa).

A chloroplast-targeting transit peptide spans 1 to 37; that stretch reads MSATLTGSGTALGFSCSSKISKRVSSSPSTRCSIKMS. Position 313 is an N6-(pyridoxal phosphate)lysine (Lys313).

Belongs to the class-III pyridoxal-phosphate-dependent aminotransferase family. HemL subfamily. Homodimer. The cofactor is pyridoxal 5'-phosphate.

It localises to the plastid. Its subcellular location is the chloroplast. The enzyme catalyses (S)-4-amino-5-oxopentanoate = 5-aminolevulinate. Its pathway is porphyrin-containing compound metabolism; protoporphyrin-IX biosynthesis; 5-aminolevulinate from L-glutamyl-tRNA(Glu): step 2/2. It participates in porphyrin-containing compound metabolism; chlorophyll biosynthesis. The protein is Glutamate-1-semialdehyde 2,1-aminomutase, chloroplastic (GSA) of Brassica napus (Rape).